The primary structure comprises 263 residues: 5'-nucleotidase SurE (263 aa).

A divalent metal cation-binding residues include aspartate 8, aspartate 9, serine 40, and asparagine 93.

This sequence belongs to the SurE nucleotidase family. Requires a divalent metal cation as cofactor.

The protein localises to the cytoplasm. The catalysed reaction is a ribonucleoside 5'-phosphate + H2O = a ribonucleoside + phosphate. In terms of biological role, nucleotidase that shows phosphatase activity on nucleoside 5'-monophosphates. This chain is 5'-nucleotidase SurE, found in Beijerinckia indica subsp. indica (strain ATCC 9039 / DSM 1715 / NCIMB 8712).